A 355-amino-acid polypeptide reads, in one-letter code: Biotin synthase (355 aa).

The region spanning 51 to 275 (NTVKVNYLVN…VCPDKEIRIA (225 aa)) is the Radical SAM core domain. [4Fe-4S] cluster-binding residues include cysteine 66, cysteine 70, and cysteine 73. [2Fe-2S] cluster contacts are provided by cysteine 110, cysteine 143, cysteine 203, and arginine 273.

Belongs to the radical SAM superfamily. Biotin synthase family. In terms of assembly, homodimer. The cofactor is [4Fe-4S] cluster. [2Fe-2S] cluster is required as a cofactor.

It catalyses the reaction (4R,5S)-dethiobiotin + (sulfur carrier)-SH + 2 reduced [2Fe-2S]-[ferredoxin] + 2 S-adenosyl-L-methionine = (sulfur carrier)-H + biotin + 2 5'-deoxyadenosine + 2 L-methionine + 2 oxidized [2Fe-2S]-[ferredoxin]. It functions in the pathway cofactor biosynthesis; biotin biosynthesis; biotin from 7,8-diaminononanoate: step 2/2. Catalyzes the conversion of dethiobiotin (DTB) to biotin by the insertion of a sulfur atom into dethiobiotin via a radical-based mechanism. The protein is Biotin synthase of Saccharopolyspora erythraea (strain ATCC 11635 / DSM 40517 / JCM 4748 / NBRC 13426 / NCIMB 8594 / NRRL 2338).